The following is an 87-amino-acid chain: DNA-directed RNA polymerase subunit omega (87 aa).

It belongs to the RNA polymerase subunit omega family. As to quaternary structure, the RNAP catalytic core consists of 2 alpha, 1 beta, 1 beta' and 1 omega subunit. When a sigma factor is associated with the core the holoenzyme is formed, which can initiate transcription.

The enzyme catalyses RNA(n) + a ribonucleoside 5'-triphosphate = RNA(n+1) + diphosphate. In terms of biological role, promotes RNA polymerase assembly. Latches the N- and C-terminal regions of the beta' subunit thereby facilitating its interaction with the beta and alpha subunits. The sequence is that of DNA-directed RNA polymerase subunit omega from Leifsonia xyli subsp. xyli (strain CTCB07).